Reading from the N-terminus, the 136-residue chain is MYSWYFPKDSPSTGLGHRHDWEHVIVWIDNPEVPEPKILGVTPSAHSGYSSQVPPDADKVDGSSVKVKYLSKWPINHALESTGEGGDFQDLIMWTQMTDAAREGLSKTGWGKANVPMVDGNFEAKLGKAWPFGEKK.

Residues 1-9 (MYSWYFPKD) carry the Conserved undecapeptide motif I motif. The Hepta-peptide GHRHDWE motif II motif lies at 16 to 22 (GHRHDWE).

It belongs to the Necrosis inducing protein (NPP1) family.

It localises to the secreted. Functionally, secreted effector that contributes moderately to virulence during infection by P.capsici. Causes only small yellow areas at 3 days after inoculation of host C.annuum leaves; these areas expand somewhat and became necrotic at 7 days after inoculation. Leads only to chlorotic areas, without necrosis at 7 days after non-host N.benthamiana leaves infection. The sequence is that of NLP effector protein 13 from Phytophthora capsici.